We begin with the raw amino-acid sequence, 199 residues long: Adenylyl-sulfate kinase (199 aa).

31–38 (GLSGSGKS) is an ATP binding site. Ser105 functions as the Phosphoserine intermediate in the catalytic mechanism.

It belongs to the APS kinase family.

The enzyme catalyses adenosine 5'-phosphosulfate + ATP = 3'-phosphoadenylyl sulfate + ADP + H(+). It participates in sulfur metabolism; hydrogen sulfide biosynthesis; sulfite from sulfate: step 2/3. Functionally, catalyzes the synthesis of activated sulfate. This is Adenylyl-sulfate kinase from Marinobacter nauticus (strain ATCC 700491 / DSM 11845 / VT8) (Marinobacter aquaeolei).